The chain runs to 719 residues: MRVNALLPLSGLIGTALAACPFADPSALGRRAEGGEVDARQRLKEVEVDDNGQFMTTDFGGNIEEQFSLKAGGRGSTLLEDFIFRQKLQHFDHERIPERVVHARGAGAHGIFTSYGDWSNITAASFLGAKDKQTPVFVRFSTVAGSRGSADTARDVHGFATRFYTDEGNFDIVGNNIPVFFIQDAIRFPDLIHSVKPSPDNEVPQAATAHDSAWDFFSSQPSALHTLFWAMSGNGIPRSYRHMDGFGIHTFRLVTEDGKSKLVKWHWKTKQGKAALVWEEAQVLAGKNADFHRQDLWDAIESGNAPSWELAVQLIDEDKAQAYGFDLLDPTKFLPEEFAPLQVLGEMTLNRNPMNYFAETEQISFQPGHIVRGVDFTEDPLLQGRLYSYLDTQLNRHRGPNFEQLPINRPVSGVHNNHRDGQGQAWIHKNIHHYSPSYLNKGYPAQANQTVGRGFFTTPGRTASGVLNRELSATFDDHYTQPRLFFNSLTPVEQQFVINAIRFEASHVTNEQVKKNVLEQLNKISNDVAKRVAVALGLEAPQPDPTYYHNNVTRGVSIFNESLPTIATLRVGVLSTTKGGSLDKAKALKEQLEKDGLKVTVIAEYLASGVDQTYSAADATAFDAVVVAEGAERVFSGKGAMSPLFPAGRPSQILTDGYRWGKPVAAVGSAKKALQSIGVEEKEAGVYAGAQDEVIKGVEEGLKVFKFLERFAVDGDDEE.

An N-terminal signal peptide occupies residues 1–18 (MRVNALLPLSGLIGTALA). A propeptide spanning residues 19–30 (ACPFADPSALGR) is cleaved from the precursor. Residues His-102 and Asn-175 contribute to the active site. Tyr-389 is a heme binding site.

Belongs to the catalase family. Heme serves as cofactor.

It carries out the reaction 2 H2O2 = O2 + 2 H2O. In terms of biological role, occurs in almost all aerobically respiring organisms and serves to protect cells from the toxic effects of hydrogen peroxide. This chain is Catalase-3 (cat-3), found in Neurospora crassa (strain ATCC 24698 / 74-OR23-1A / CBS 708.71 / DSM 1257 / FGSC 987).